The following is a 92-amino-acid chain: MIFNSEELIIISDLGIVWVVSIIINDAKGKLEKKLEERLKELEKLEELEKELEKIENELRLMRGVPLDLTDIKGKLDELKAEIAWLEYKVDK.

This is an uncharacterized protein from Sulfolobus spindle-shape virus 1 (SSV1).